A 905-amino-acid chain; its full sequence is Protein translocase subunit SecA (905 aa).

ATP contacts are provided by residues glutamine 87, glycine 105–threonine 109, and aspartate 509. Positions 890, 892, 901, and 902 each coordinate Zn(2+).

The protein belongs to the SecA family. In terms of assembly, monomer and homodimer. Part of the essential Sec protein translocation apparatus which comprises SecA, SecYEG and auxiliary proteins SecDF-YajC and YidC. It depends on Zn(2+) as a cofactor.

The protein localises to the cell inner membrane. The protein resides in the cytoplasm. It carries out the reaction ATP + H2O + cellular proteinSide 1 = ADP + phosphate + cellular proteinSide 2.. In terms of biological role, part of the Sec protein translocase complex. Interacts with the SecYEG preprotein conducting channel. Has a central role in coupling the hydrolysis of ATP to the transfer of proteins into and across the cell membrane, serving both as a receptor for the preprotein-SecB complex and as an ATP-driven molecular motor driving the stepwise translocation of polypeptide chains across the membrane. The sequence is that of Protein translocase subunit SecA from Acinetobacter baylyi (strain ATCC 33305 / BD413 / ADP1).